A 265-amino-acid polypeptide reads, in one-letter code: Hydroxyethylthiazole kinase (265 aa).

Methionine 43 is a binding site for substrate. ATP is bound by residues lysine 118 and threonine 165. Glycine 192 provides a ligand contact to substrate.

The protein belongs to the Thz kinase family. It depends on Mg(2+) as a cofactor.

It catalyses the reaction 5-(2-hydroxyethyl)-4-methylthiazole + ATP = 4-methyl-5-(2-phosphooxyethyl)-thiazole + ADP + H(+). Its pathway is cofactor biosynthesis; thiamine diphosphate biosynthesis; 4-methyl-5-(2-phosphoethyl)-thiazole from 5-(2-hydroxyethyl)-4-methylthiazole: step 1/1. Functionally, catalyzes the phosphorylation of the hydroxyl group of 4-methyl-5-beta-hydroxyethylthiazole (THZ). In Pyrococcus abyssi (strain GE5 / Orsay), this protein is Hydroxyethylthiazole kinase.